Reading from the N-terminus, the 418-residue chain is Gamma-glutamyl phosphate reductase (418 aa).

It belongs to the gamma-glutamyl phosphate reductase family.

The protein localises to the cytoplasm. It catalyses the reaction L-glutamate 5-semialdehyde + phosphate + NADP(+) = L-glutamyl 5-phosphate + NADPH + H(+). It functions in the pathway amino-acid biosynthesis; L-proline biosynthesis; L-glutamate 5-semialdehyde from L-glutamate: step 2/2. Catalyzes the NADPH-dependent reduction of L-glutamate 5-phosphate into L-glutamate 5-semialdehyde and phosphate. The product spontaneously undergoes cyclization to form 1-pyrroline-5-carboxylate. The chain is Gamma-glutamyl phosphate reductase from Nitrosococcus oceani (strain ATCC 19707 / BCRC 17464 / JCM 30415 / NCIMB 11848 / C-107).